Reading from the N-terminus, the 275-residue chain is Lincomycin biosynthesis protein LmbN (275 aa).

In terms of domain architecture, Carrier spans 1–78; it reads MSTLDEVLAL…AIAATVARIT (78 aa). Ser-37 is modified (O-(pantetheine 4'-phosphoryl)serine). One can recognise an SIS domain in the interval 113–275; it reads LFDTWHAGGT…HHALCVAHAP (163 aa).

It participates in antibiotic biosynthesis; lincomycin biosynthesis. This Streptomyces lincolnensis protein is Lincomycin biosynthesis protein LmbN (lmbN).